The following is a 340-amino-acid chain: MNPFHSSCWNTSAELSNKSWNKEFAYQTASAVDTVILPSMIGIICSTGLVGNILIVFTIIRSRKKTVPDIYICNLAVADLVHIIGMPFLIHQWARGGEWVFGGPLCTIITSLDTCNQFACSAIMTVMSVDRYFALVQPFRLTSWRTRYKTIRINLGLWAASFILALPVWIYSKVIKFKDGVESCAFDLTSPDDVLWYTLYLTITTFFFPLPLILVCYILILCYTWEMYQQNKDARCCNPSVPKQRVMKLTKMVLVLVAVFILSAAPYHVIQLVNLQMEQPTLAFYVGYYLSICLSYASSSINPFLYILLSGNFQKRLPQIQRRVTDKEIKNMGNTLKSHF.

The Extracellular segment spans residues 1–34 (MNPFHSSCWNTSAELSNKSWNKEFAYQTASAVDT). N-linked (GlcNAc...) asparagine glycosylation is found at Asn10 and Asn17. A helical membrane pass occupies residues 35-57 (VILPSMIGIICSTGLVGNILIVF). Residues 58 to 69 (TIIRSRKKTVPD) lie on the Cytoplasmic side of the membrane. Residues 70–92 (IYICNLAVADLVHIIGMPFLIHQ) traverse the membrane as a helical segment. Topologically, residues 93–106 (WARGGEWVFGGPLC) are extracellular. Residues 107–129 (TIITSLDTCNQFACSAIMTVMSV) traverse the membrane as a helical segment. Over 130 to 149 (DRYFALVQPFRLTSWRTRYK) the chain is Cytoplasmic. A helical membrane pass occupies residues 150-172 (TIRINLGLWAASFILALPVWIYS). The Extracellular portion of the chain corresponds to 173-198 (KVIKFKDGVESCAFDLTSPDDVLWYT). The helical transmembrane segment at 199-221 (LYLTITTFFFPLPLILVCYILIL) threads the bilayer. Residues 222 to 252 (CYTWEMYQQNKDARCCNPSVPKQRVMKLTKM) lie on the Cytoplasmic side of the membrane. The helical transmembrane segment at 253–272 (VLVLVAVFILSAAPYHVIQL) threads the bilayer. Topologically, residues 273 to 286 (VNLQMEQPTLAFYV) are extracellular. The chain crosses the membrane as a helical span at residues 287 to 309 (GYYLSICLSYASSSINPFLYILL). Residues 310-340 (SGNFQKRLPQIQRRVTDKEIKNMGNTLKSHF) lie on the Cytoplasmic side of the membrane.

It belongs to the G-protein coupled receptor 1 family.

The protein resides in the cell membrane. Receptor for melanin-concentrating hormone, coupled to G proteins that activate phosphoinositide hydrolysis. This Macaca fascicularis (Crab-eating macaque) protein is Melanin-concentrating hormone receptor 2 (MCHR2).